A 109-amino-acid polypeptide reads, in one-letter code: Nucleoid-associated protein HD_0326 (109 aa).

The protein belongs to the YbaB/EbfC family. Homodimer.

It is found in the cytoplasm. The protein localises to the nucleoid. Its function is as follows. Binds to DNA and alters its conformation. May be involved in regulation of gene expression, nucleoid organization and DNA protection. The sequence is that of Nucleoid-associated protein HD_0326 from Haemophilus ducreyi (strain 35000HP / ATCC 700724).